Reading from the N-terminus, the 379-residue chain is Succinyl-diaminopimelate desuccinylase (379 aa).

Histidine 70 contributes to the Zn(2+) binding site. Residue aspartate 72 is part of the active site. Residue aspartate 103 coordinates Zn(2+). Glutamate 137 functions as the Proton acceptor in the catalytic mechanism. Glutamate 138, glutamate 166, and histidine 352 together coordinate Zn(2+).

The protein belongs to the peptidase M20A family. DapE subfamily. In terms of assembly, homodimer. It depends on Zn(2+) as a cofactor. Co(2+) serves as cofactor.

The enzyme catalyses N-succinyl-(2S,6S)-2,6-diaminopimelate + H2O = (2S,6S)-2,6-diaminopimelate + succinate. It functions in the pathway amino-acid biosynthesis; L-lysine biosynthesis via DAP pathway; LL-2,6-diaminopimelate from (S)-tetrahydrodipicolinate (succinylase route): step 3/3. In terms of biological role, catalyzes the hydrolysis of N-succinyl-L,L-diaminopimelic acid (SDAP), forming succinate and LL-2,6-diaminopimelate (DAP), an intermediate involved in the bacterial biosynthesis of lysine and meso-diaminopimelic acid, an essential component of bacterial cell walls. This Burkholderia cenocepacia (strain HI2424) protein is Succinyl-diaminopimelate desuccinylase.